Consider the following 140-residue polypeptide: Methylglyoxal synthase (140 aa).

The region spanning 1–140 (MRSKPRIALI…DQAAADDAAP (140 aa)) is the MGS-like domain. Substrate-binding positions include His12, Lys16, 38–41 (TGTT), and 58–59 (SG). Asp64 (proton donor/acceptor) is an active-site residue. Substrate is bound at residue His91.

Belongs to the methylglyoxal synthase family.

The catalysed reaction is dihydroxyacetone phosphate = methylglyoxal + phosphate. Catalyzes the formation of methylglyoxal from dihydroxyacetone phosphate. In Cupriavidus metallidurans (strain ATCC 43123 / DSM 2839 / NBRC 102507 / CH34) (Ralstonia metallidurans), this protein is Methylglyoxal synthase.